The primary structure comprises 180 residues: LDLR chaperone boca (180 aa).

The signal sequence occupies residues Met1–Ala18. The span at Gln48 to Leu61 shows a compositional bias: acidic residues. Residues Gln48–Ser78 form a disordered region. A structured core region spans residues Thr93–Glu166. Residues Lys177 to Leu180 carry the Prevents secretion from ER motif.

This sequence belongs to the MESD family. In terms of assembly, monomer. Interacts with Arrow and Yolkless.

It is found in the endoplasmic reticulum. Its function is as follows. Chaperone specifically assisting the folding of beta-propeller/EGF modules within the family of low-density lipoprotein receptors (LDLRs). Acts as a modulator of the Wg pathway, since some LDLRs are coreceptors for the canonical Wnt pathway. The polypeptide is LDLR chaperone boca (boca) (Drosophila melanogaster (Fruit fly)).